The following is a 549-amino-acid chain: Glucose-6-phosphate isomerase (549 aa).

Glutamate 355 acts as the Proton donor in catalysis. Catalysis depends on residues histidine 386 and lysine 514.

Belongs to the GPI family.

It localises to the cytoplasm. The enzyme catalyses alpha-D-glucose 6-phosphate = beta-D-fructose 6-phosphate. It participates in carbohydrate biosynthesis; gluconeogenesis. It functions in the pathway carbohydrate degradation; glycolysis; D-glyceraldehyde 3-phosphate and glycerone phosphate from D-glucose: step 2/4. Its function is as follows. Catalyzes the reversible isomerization of glucose-6-phosphate to fructose-6-phosphate. The polypeptide is Glucose-6-phosphate isomerase (Klebsiella pneumoniae (strain 342)).